A 168-amino-acid polypeptide reads, in one-letter code: uncharacterized protein (168 aa).

Helical transmembrane passes span 15 to 33, 41 to 57, 73 to 93, 108 to 128, and 129 to 149; these read YLTV…LAVL, LSLT…ASSL, WIGL…GALL, VPLL…WVLN, and NLIA…VLAI.

The protein resides in the cell membrane. This is an uncharacterized protein from Haemophilus influenzae (strain ATCC 51907 / DSM 11121 / KW20 / Rd).